Reading from the N-terminus, the 81-residue chain is Cortexin-2 (81 aa).

The chain crosses the membrane as a helical span at residues 29–49 (TGFAFVGILCIFLGLLIIRCF).

This sequence belongs to the cortexin family.

Its subcellular location is the membrane. The sequence is that of Cortexin-2 (Ctxn2) from Mus musculus (Mouse).